Reading from the N-terminus, the 147-residue chain is Ribosome-binding factor A (147 aa).

The tract at residues 123–147 is disordered; the sequence is LAKLKEGAQPAGDANPYKTSDEEED.

It belongs to the RbfA family. In terms of assembly, monomer. Binds 30S ribosomal subunits, but not 50S ribosomal subunits or 70S ribosomes.

The protein resides in the cytoplasm. In terms of biological role, one of several proteins that assist in the late maturation steps of the functional core of the 30S ribosomal subunit. Associates with free 30S ribosomal subunits (but not with 30S subunits that are part of 70S ribosomes or polysomes). Required for efficient processing of 16S rRNA. May interact with the 5'-terminal helix region of 16S rRNA. This chain is Ribosome-binding factor A, found in Corynebacterium aurimucosum (strain ATCC 700975 / DSM 44827 / CIP 107346 / CN-1) (Corynebacterium nigricans).